The sequence spans 1110 residues: Ribosome assembly protein 1 (1110 aa).

A tr-type G domain is found at 17–262 (SCIRNICIVA…QKLGAKRENL (246 aa)). GTP is bound by residues 26 to 33 (AHVDHGKT), 102 to 106 (DSPGH), and 156 to 159 (NKID). Serine 431 is modified (phosphoserine).

This sequence belongs to the TRAFAC class translation factor GTPase superfamily. Classic translation factor GTPase family.

Its subcellular location is the cytoplasm. It carries out the reaction GTP + H2O = GDP + phosphate + H(+). GTPase activity is stimulated in the presence of 60S subunits. In terms of biological role, GTPase involved in the biogenesis of the 60S ribosomal subunit and translational activation of ribosomes. Together with SDO1, may trigger the GTP-dependent release of TIF6 from 60S pre-ribosomes in the cytoplasm, thereby activating ribosomes for translation competence by allowing 80S ribosome assembly and facilitating TIF6 recycling to the nucleus, where it is required for 60S rRNA processing and nuclear export. Inhibits GTPase activity of ribosome-bound EF-2. In Saccharomyces cerevisiae (strain ATCC 204508 / S288c) (Baker's yeast), this protein is Ribosome assembly protein 1 (RIA1).